Reading from the N-terminus, the 761-residue chain is Phosphoribosylformylglycinamidine synthase subunit PurL (761 aa).

His-58 is a catalytic residue. Residues Tyr-61 and Lys-105 each contribute to the ATP site. Glu-107 is a Mg(2+) binding site. Residues 108–111 and Arg-130 contribute to the substrate site; that span reads SHNH. The active-site Proton acceptor is the His-109. Residue Asp-131 participates in Mg(2+) binding. Gln-259 contacts substrate. Asp-287 is a Mg(2+) binding site. 331 to 333 is a binding site for substrate; the sequence is ESQ. Residues Asn-519 and Gly-556 each coordinate ATP. Asn-557 contributes to the Mg(2+) binding site. Ser-559 contacts substrate.

Belongs to the FGAMS family. As to quaternary structure, monomer. Part of the FGAM synthase complex composed of 1 PurL, 1 PurQ and 2 PurS subunits.

It localises to the cytoplasm. It catalyses the reaction N(2)-formyl-N(1)-(5-phospho-beta-D-ribosyl)glycinamide + L-glutamine + ATP + H2O = 2-formamido-N(1)-(5-O-phospho-beta-D-ribosyl)acetamidine + L-glutamate + ADP + phosphate + H(+). Its pathway is purine metabolism; IMP biosynthesis via de novo pathway; 5-amino-1-(5-phospho-D-ribosyl)imidazole from N(2)-formyl-N(1)-(5-phospho-D-ribosyl)glycinamide: step 1/2. Part of the phosphoribosylformylglycinamidine synthase complex involved in the purines biosynthetic pathway. Catalyzes the ATP-dependent conversion of formylglycinamide ribonucleotide (FGAR) and glutamine to yield formylglycinamidine ribonucleotide (FGAM) and glutamate. The FGAM synthase complex is composed of three subunits. PurQ produces an ammonia molecule by converting glutamine to glutamate. PurL transfers the ammonia molecule to FGAR to form FGAM in an ATP-dependent manner. PurS interacts with PurQ and PurL and is thought to assist in the transfer of the ammonia molecule from PurQ to PurL. The protein is Phosphoribosylformylglycinamidine synthase subunit PurL of Rhodococcus opacus (strain B4).